A 210-amino-acid polypeptide reads, in one-letter code: 7-carboxy-7-deazaguanine synthase (210 aa).

Substrate-binding positions include 12-14 (LQG) and R27. Positions 18–210 (QAGRAAVFCR…LQTHKYIGIP (193 aa)) constitute a Radical SAM core domain. [4Fe-4S] cluster contacts are provided by C31, C46, and C49. T51 lines the Mg(2+) pocket. Substrate is bound at residue T90. S-adenosyl-L-methionine contacts are provided by residues G92, 133-135 (SPK), and 173-176 (QPMD). Residue P210 coordinates substrate.

Belongs to the radical SAM superfamily. 7-carboxy-7-deazaguanine synthase family. In terms of assembly, homodimer. It depends on [4Fe-4S] cluster as a cofactor. S-adenosyl-L-methionine serves as cofactor. Mg(2+) is required as a cofactor.

It catalyses the reaction 6-carboxy-5,6,7,8-tetrahydropterin + H(+) = 7-carboxy-7-deazaguanine + NH4(+). It participates in purine metabolism; 7-cyano-7-deazaguanine biosynthesis. Functionally, catalyzes the complex heterocyclic radical-mediated conversion of 6-carboxy-5,6,7,8-tetrahydropterin (CPH4) to 7-carboxy-7-deazaguanine (CDG), a step common to the biosynthetic pathways of all 7-deazapurine-containing compounds. This chain is 7-carboxy-7-deazaguanine synthase, found in Bordetella pertussis (strain Tohama I / ATCC BAA-589 / NCTC 13251).